Reading from the N-terminus, the 660-residue chain is MLLSNQPANTKPQQTPSPSQTQNFKSKLQQQIVSAAAAAAANIANGSSHHHHHQNHHHHHPLNNHHNHNHNQHNISFATDFSIAAIMARGGNAPSSREPSERSLSPASVERYSGQDADDDVDVDVVDCSDSEMPSATAAAAAAATTAAAAAAALQAQQQARQALRVAQQQQQQQQQQRQQTHHHATTGKQQRQHHNHHSSNTNNSSNSGNSNTNSKSSSQRGRSAAAVGAAATPSPPPPPPSQSPEELERLSPEESPAQQPTPKIVGSCNCDDLTPVQCHLETKELWDKFHELGTEMIITKSGRRMFPTVRVSFSGPLRQIQPADRYAVLLDVVPLDSRRYRYAYHRSSWLVAGKADPPPPSRIYAHPDCPLSPEALRKQVVSFEKVKLTNNEMDKSGQVVLNSMHRYQPRIHLVRLSHGQSIPGSPKELQDMDHKTFVFPETVFTAVTAYQNQLITKLKIDSNPFAKGFRDSSRLSDFDRDPMDAFFFDQHMRTAPLRFFPDPLMSQLTPQEADAASMALLEKARQHLQMFGRSPYTEMLLPHLYQRSAAPPPPPPAPHLSAFQLGMWQQQWPQLTAGFLASANQQAALALAAAGANRTPPPSMAVAPPAPATPTSSCGSASPDLRARPQLNHYPQRFSPYQVPQHQASPPASNRAESP.

Residues 1–11 (MLLSNQPANTK) are compositionally biased toward polar residues. Disordered stretches follow at residues 1–72 (MLLS…NHNQ), 90–122 (GGNAPSSREPSERSLSPASVERYSGQDADDDVD), and 169–266 (QQQQ…PKIV). The segment covering 12 to 22 (PQQTPSPSQTQ) has biased composition (low complexity). Polar residues predominate over residues 23-33 (NFKSKLQQQIV). Residues 35–47 (AAAAAAANIANGS) show a composition bias toward low complexity. Residues 48 to 71 (SHHHHHQNHHHHHPLNNHHNHNHN) are compositionally biased toward basic residues. 2 stretches are compositionally biased toward low complexity: residues 93–108 (APSSREPSERSLSPAS) and 169–179 (QQQQQQQQQRQ). Residues 180-198 (QTHHHATTGKQQRQHHNHH) show a composition bias toward basic residues. Residues 199–233 (SSNTNNSSNSGNSNTNSKSSSQRGRSAAAVGAAAT) are compositionally biased toward low complexity. Over residues 234–243 (PSPPPPPPSQ) the composition is skewed to pro residues. The T-box DNA-binding region spans 286-472 (LWDKFHELGT…SNPFAKGFRD (187 aa)). Residues 598–660 (NRTPPPSMAV…PPASNRAESP (63 aa)) form a disordered region. The span at 600–613 (TPPPSMAVAPPAPA) shows a compositional bias: pro residues. Over residues 614–624 (TPTSSCGSASP) the composition is skewed to low complexity. Residues 643 to 660 (QVPQHQASPPASNRAESP) show a composition bias toward polar residues.

It is found in the nucleus. This Drosophila melanogaster (Fruit fly) protein is T-box protein H15 (H15).